Reading from the N-terminus, the 375-residue chain is Fluoride export protein 2 (375 aa).

Topologically, residues 1–11 (MIFNPVISNHK) are cytoplasmic. A helical membrane pass occupies residues 12–32 (LSHYIHVFCTFTTFCILGTET). The Extracellular portion of the chain corresponds to 33-34 (RQ). The helical transmembrane segment at 35–55 (AITALSTYTPAFVTAPTVLWS) threads the bilayer. Residues 56–79 (NCSSCMLMGIMQSLNAYTWMKDHQ) are Cytoplasmic-facing. The chain crosses the membrane as a helical span at residues 80–100 (VLFLGVTTGYCGALSSFSSML). Topologically, residues 101-127 (LEMFEHSTNLTNGNIANHTKLPNRAYG) are extracellular. Residues N109 and N117 are each glycosylated (N-linked (GlcNAc...) asparagine). A helical transmembrane segment spans residues 128–148 (IMEFLSVLLVHLMVSMGSLIF). At 149 to 213 (GRQLGKEVIV…FKKFFDVVDK (65 aa)) the chain is on the cytoplasmic side. Residues 214-234 (LAYALAFPLIILFVVLCAYYE) form a helical membrane-spanning segment. N235 carries an N-linked (GlcNAc...) asparagine glycan. At 235–241 (NYSRGKW) the chain is on the extracellular side. The helical transmembrane segment at 242–262 (TLPCLFGIFAGFLRYWLAEMF) threads the bilayer. The Cytoplasmic portion of the chain corresponds to 263–268 (NKTNKK). A helical membrane pass occupies residues 269–289 (FPLGTFLANVFATLLIGIFTM). The Extracellular portion of the chain corresponds to 290–310 (VQRGKKHFSTDIPIVNSLNSC). The chain crosses the membrane as a helical span at residues 311 to 331 (HIVSALISGFCGTLSTISTFI). The Cytoplasmic portion of the chain corresponds to 332 to 338 (NEGYKLS). A helical transmembrane segment spans residues 339 to 359 (FINMLIYYTVSIGISYCLLVI). The Extracellular portion of the chain corresponds to 360 to 375 (TLGSYAWTRGLTNPIC).

This sequence belongs to the fluoride channel Fluc/FEX (TC 1.A.43) family.

The protein resides in the cell membrane. It carries out the reaction fluoride(in) = fluoride(out). Its function is as follows. Fluoride channel required for the rapid expulsion of cytoplasmic fluoride. This is Fluoride export protein 2 from Saccharomyces cerevisiae (strain ATCC 204508 / S288c) (Baker's yeast).